We begin with the raw amino-acid sequence, 249 residues long: Electron transfer flavoprotein subunit beta (249 aa).

It belongs to the ETF beta-subunit/FixA family. In terms of assembly, heterodimer of an alpha and a beta subunit. Requires FAD as cofactor. AMP is required as a cofactor.

The electron transfer flavoprotein serves as a specific electron acceptor for other dehydrogenases. It transfers the electrons to the main respiratory chain via ETF-ubiquinone oxidoreductase (ETF dehydrogenase). The sequence is that of Electron transfer flavoprotein subunit beta (etfB) from Pseudomonas aeruginosa (strain ATCC 15692 / DSM 22644 / CIP 104116 / JCM 14847 / LMG 12228 / 1C / PRS 101 / PAO1).